Consider the following 496-residue polypeptide: MPIFSTRVLTYLRCIFRLFIGLTLLLTLVGCDFYTPSSQLEQIRQRGEIRVGTIYGPTSYYQRDDTAQGFDYELAQSYADWLGVKLTIVPVYSTAELVELLRKGKLDLAAAAIVVTPERRQLFRFGPGFYQVSPKLVYRNGSPKPKDIGDLKGNIVVPAGSTGEDLLKELAKQYPNLKWSTNRDADVEELLKQVADGKIDYTVVQDTVLARTQRYYPELTEGMTLAKNQTVAWAMTKLPDDSLYASIIDFFGQRFMDGAIAKLDEKYFGHVQNFDFVDTRTFLQRAKSLLPKYQDLFKTHANVVDWRLLAAISYQESHWDPEARSYTGVRGMMMLTEPTAKAMGVNNRLHPEESIKGGARYLEQMMEKVPASVPDDEKVWFALTAYNIGYGHMMDARRLTKELGKNPDAWSDVKEVLPLLQQSRWHRKVRYGYARGGEARNYVNNVRQYYQSLLWLDNEQQKAHRREELDDDDSSEPPSAERPTVIAEVVKQITLR.

An N-terminal signal peptide occupies residues 1-31 (MPIFSTRVLTYLRCIFRLFIGLTLLLTLVGC). A non-LT domain region spans residues 32 to 271 (DFYTPSSQLE…KLDEKYFGHV (240 aa)). An LT domain region spans residues 273–496 (NFDFVDTRTF…AEVVKQITLR (224 aa)). Glu316 is an active-site residue. Positions 464-486 (HRREELDDDDSSEPPSAERPTVI) are disordered.

In the N-terminal section; belongs to the bacterial solute-binding protein 3 family. This sequence in the C-terminal section; belongs to the transglycosylase Slt family.

The protein resides in the cell outer membrane. It carries out the reaction Exolytic cleavage of the (1-&gt;4)-beta-glycosidic linkage between N-acetylmuramic acid (MurNAc) and N-acetylglucosamine (GlcNAc) residues in peptidoglycan, from either the reducing or the non-reducing ends of the peptidoglycan chains, with concomitant formation of a 1,6-anhydrobond in the MurNAc residue.. In terms of biological role, murein-degrading enzyme that degrades murein glycan strands and insoluble, high-molecular weight murein sacculi, with the concomitant formation of a 1,6-anhydromuramoyl product. Lytic transglycosylases (LTs) play an integral role in the metabolism of the peptidoglycan (PG) sacculus. Their lytic action creates space within the PG sacculus to allow for its expansion as well as for the insertion of various structures such as secretion systems and flagella. This is Membrane-bound lytic murein transglycosylase F from Aeromonas hydrophila subsp. hydrophila (strain ATCC 7966 / DSM 30187 / BCRC 13018 / CCUG 14551 / JCM 1027 / KCTC 2358 / NCIMB 9240 / NCTC 8049).